Consider the following 378-residue polypeptide: Serpin B6 (378 aa).

Met1 carries the post-translational modification N-acetylmethionine. Lys196 is modified (N6-acetyllysine).

The protein belongs to the serpin family. Ov-serpin subfamily. Forms a complex with the monomeric form of beta-tryptase. Brain.

It localises to the cytoplasm. Functionally, inhibitor of cathepsin G, kallikrein-8 and thrombin. May play an important role in the inner ear in the protection against leakage of lysosomal content during stress. May be involved in the regulation of serine proteinases present in the brain or extravasated from the blood. The chain is Serpin B6 (SERPINB6) from Bos taurus (Bovine).